Here is a 355-residue protein sequence, read N- to C-terminus: MAFSGSQAPYLSPAVPFSGTIQGGLQDGLQITVNGTVLSSSGTRFAVNFQTGFSGNDIAFHFNPRFEDGGYVVCNTRQNGSWGPEERKTHMPFQKGMPFDLCFLVQSSDFKVMVNGILFVQYFHRVPFHRVDTISVNGSVQLSYISFQNPRTVPVQPAFSTVPFSQPVCFPPRPRGRRQKPPGVWPANPAPITQTVIHTVQSAPGQMFSTPAIPPMMYPHPAYPMPFITTILGGLYPSKSILLSGTVLPSAQRFHINLCSGNHIAFHLNPRFDENAVVRNTQIDNSWGSEERSLPRKMPFVRGQSFSVWILCEAHCLKVAVDGQHLFEYYHRLRNLPTINRLEVGGDIQLTHVQT.

Galectin domains are found at residues 17 to 148 (FSGT…ISFQ) and 227 to 355 (FITT…HVQT). A beta-D-galactoside contacts are provided by residues asparagine 48, histidine 61, arginine 65, asparagine 75, 82 to 88 (WGPEERK), histidine 267, arginine 271, threonine 281, and 287 to 293 (WGSEERS).

As to quaternary structure, monomer. In terms of tissue distribution, peripheral blood leukocytes and lymphatic tissues. Expressed in lung, liver, breast and kidney with higher levels in tumor endothelial cells than normal endothelium (at protein level). Expressed in trophoblast cells in decidua and placenta in pregnancy (at protein level). Isoform 2 is the most abundant isoform expressed in endothelial cells. Upon endothelial cell activation isoform 2 expression decreases while expression of isoform 3 and isoform 5 increases. Isoform 4 decreases in pathological pregnancy.

It localises to the cytoplasm. It is found in the nucleus. The protein localises to the secreted. In terms of biological role, binds galactosides. Has high affinity for the Forssman pentasaccharide. Ligand for HAVCR2/TIM3. Binding to HAVCR2 induces T-helper type 1 lymphocyte (Th1) death. Also stimulates bactericidal activity in infected macrophages by causing macrophage activation and IL1B secretion which restricts intracellular bacterial growth. Ligand for P4HB; the interaction retains P4HB at the cell surface of Th2 T-helper cells, increasing disulfide reductase activity at the plasma membrane, altering the plasma membrane redox state and enhancing cell migration. Ligand for CD44; the interaction enhances binding of SMAD3 to the FOXP3 promoter, leading to up-regulation of FOXP3 expression and increased induced regulatory T (iTreg) cell stability and suppressive function. Promotes ability of mesenchymal stromal cells to suppress T-cell proliferation. Expands regulatory T-cells and induces cytotoxic T-cell apoptosis following virus infection. Activates ERK1/2 phosphorylation inducing cytokine (IL-6, IL-8, IL-12) and chemokine (CCL2) production in mast and dendritic cells. Inhibits degranulation and induces apoptosis of mast cells. Induces maturation and migration of dendritic cells. Inhibits natural killer (NK) cell function. Can transform NK cell phenotype from peripheral to decidual during pregnancy. Astrocyte derived galectin-9 enhances microglial TNF production. May play a role in thymocyte-epithelial interactions relevant to the biology of the thymus. May provide the molecular basis for urate flux across cell membranes, allowing urate that is formed during purine metabolism to efflux from cells and serving as an electrogenic transporter that plays an important role in renal and gastrointestinal urate excretion. Highly selective to the anion urate. Its function is as follows. Acts as an eosinophil chemoattractant. It also inhibits angiogenesis. Suppresses IFNG production by natural killer cells. This chain is Galectin-9 (LGALS9), found in Homo sapiens (Human).